The sequence spans 375 residues: Protein HrmA (375 aa).

Unknown. May serve a regulatory function. The protein is Protein HrmA (hrmA) of Pseudomonas syringae pv. syringae.